A 148-amino-acid polypeptide reads, in one-letter code: Transcriptional regulator MraZ (148 aa).

SpoVT-AbrB domains lie at 5-53 and 82-125; these read ETAI…VEKE and SALL…SEQA.

Belongs to the MraZ family. As to quaternary structure, forms oligomers.

Its subcellular location is the cytoplasm. The protein localises to the nucleoid. The protein is Transcriptional regulator MraZ of Xylella fastidiosa (strain 9a5c).